Here is a 219-residue protein sequence, read N- to C-terminus: Probable GTP-binding protein EngB (219 aa).

Residues 24–207 (VQPEIAFAGR…HALIESWVRP (184 aa)) form the EngB-type G domain. Residues 32–39 (GRSNAGKS), 59–63 (GRTQH), 81–84 (DLPG), 148–151 (TKCD), and 186–188 (FSA) contribute to the GTP site. Residues Ser39 and Thr61 each contribute to the Mg(2+) site.

This sequence belongs to the TRAFAC class TrmE-Era-EngA-EngB-Septin-like GTPase superfamily. EngB GTPase family. It depends on Mg(2+) as a cofactor.

Its function is as follows. Necessary for normal cell division and for the maintenance of normal septation. The polypeptide is Probable GTP-binding protein EngB (Burkholderia multivorans (strain ATCC 17616 / 249)).